Here is a 103-residue protein sequence, read N- to C-terminus: Large ribosomal subunit protein eL43 (103 aa).

The protein belongs to the eukaryotic ribosomal protein eL43 family.

The polypeptide is Large ribosomal subunit protein eL43 (RPL37A) (Tetrahymena thermophila (strain SB210)).